Here is a 326-residue protein sequence, read N- to C-terminus: Gamma-resorcylate decarboxylase (326 aa).

Mn(2+) contacts are provided by glutamate 8, histidine 10, histidine 164, and aspartate 287. Aspartate 287 is an active-site residue.

This sequence belongs to the metallo-dependent hydrolases superfamily. ACMSD family. In terms of assembly, homotetramer. The cofactor is Mn(2+).

It carries out the reaction 2,6-dihydroxybenzoate + H(+) = resorcinol + CO2. It catalyses the reaction 2,3-dihydroxybenzoate + H(+) = catechol + CO2. The protein operates within aromatic compound metabolism. Activity is inhibited by 2-nitroresorcinol (2-NR). In terms of biological role, involved in the gamma-resorcylate (2,6-dihydroxybenzoate) catabolism. Catalyzes the reversible decarboxylation of gamma-resorcylate to resorcinol. Also catalyzes the decarboxylation of 2,3-dihydroxybenzoate to catechol, 2,4,6-trihydroxybenzoate to benzene-1,3,5-triol, and 2,6-dihydroxy-4-methylbenzoate to 5-methylbenzene-1,3-diol. This chain is Gamma-resorcylate decarboxylase, found in Polaromonas sp. (strain JS666 / ATCC BAA-500).